The sequence spans 490 residues: Ribulose bisphosphate carboxylase large chain (490 aa).

Positions 127 and 177 each coordinate substrate. Catalysis depends on lysine 179, which acts as the Proton acceptor. Substrate is bound at residue lysine 181. Mg(2+) contacts are provided by lysine 205, aspartate 207, and glutamate 208. Position 205 is an N6-carboxylysine (lysine 205). Histidine 297 serves as the catalytic Proton acceptor. Positions 298, 330, and 382 each coordinate substrate.

Belongs to the RuBisCO large chain family. Type I subfamily. Heterohexadecamer of 8 large chains and 8 small chains. Mg(2+) serves as cofactor.

It localises to the plastid. The protein localises to the chloroplast. It carries out the reaction 2 (2R)-3-phosphoglycerate + 2 H(+) = D-ribulose 1,5-bisphosphate + CO2 + H2O. The enzyme catalyses D-ribulose 1,5-bisphosphate + O2 = 2-phosphoglycolate + (2R)-3-phosphoglycerate + 2 H(+). Its function is as follows. RuBisCO catalyzes two reactions: the carboxylation of D-ribulose 1,5-bisphosphate, the primary event in carbon dioxide fixation, as well as the oxidative fragmentation of the pentose substrate in the photorespiration process. Both reactions occur simultaneously and in competition at the same active site. This is Ribulose bisphosphate carboxylase large chain from Cylindrotheca sp. (strain N1) (Marine diatom).